Consider the following 430-residue polypeptide: Histidine--tRNA ligase (430 aa).

It belongs to the class-II aminoacyl-tRNA synthetase family. In terms of assembly, homodimer.

It is found in the cytoplasm. The enzyme catalyses tRNA(His) + L-histidine + ATP = L-histidyl-tRNA(His) + AMP + diphosphate + H(+). The sequence is that of Histidine--tRNA ligase (hisS) from Clostridium acetobutylicum (strain ATCC 824 / DSM 792 / JCM 1419 / IAM 19013 / LMG 5710 / NBRC 13948 / NRRL B-527 / VKM B-1787 / 2291 / W).